Consider the following 278-residue polypeptide: Probable cytochrome c oxidase subunit 3 (278 aa).

6 helical membrane passes run 21-41, 46-66, 89-109, 174-194, 212-232, and 256-276; these read PWPV…VSFM, FNIY…YSWW, IGMA…FASF, CVTA…MQAY, FYLA…FLIV, and AWYW…VYIF.

The protein belongs to the cytochrome c oxidase subunit 3 family.

The protein localises to the cell membrane. It catalyses the reaction 4 Fe(II)-[cytochrome c] + O2 + 8 H(+)(in) = 4 Fe(III)-[cytochrome c] + 2 H2O + 4 H(+)(out). This Rickettsia felis (strain ATCC VR-1525 / URRWXCal2) (Rickettsia azadi) protein is Probable cytochrome c oxidase subunit 3 (ctaE).